The primary structure comprises 155 residues: Transcriptional repressor NrdR (155 aa).

The segment at 3–34 is a zinc-finger region; the sequence is CPFCHAEETKVVDSRLVADGAQVRRRRECLEC. In terms of domain architecture, ATP-cone spans 49–139; sequence PLIIKRDGRR…VYKRFKDVSD (91 aa).

The protein belongs to the NrdR family. Zn(2+) is required as a cofactor.

Its function is as follows. Negatively regulates transcription of bacterial ribonucleotide reductase nrd genes and operons by binding to NrdR-boxes. This Legionella pneumophila (strain Paris) protein is Transcriptional repressor NrdR.